The sequence spans 473 residues: Biotin-dependent acetyl-/propionyl-coenzyme A carboxylase beta6 subunit (473 aa).

Residues 1–224 form the CoA carboxyltransferase N-terminal domain; it reads MTIMAPEAVG…QGHFDRSKAE (224 aa). In terms of domain architecture, CoA carboxyltransferase C-terminal spans 225 to 473; that stretch reads AGDTDIHALL…RRGRHKNIPL (249 aa).

It belongs to the AccD/PCCB family. As to quaternary structure, the biotin-dependent acyl-CoA carboxylase complex is composed of AccA3, which contains the biotin carboxylase (BC) and biotin carboxyl carrier protein (BCCP) domains, and AccD6, which contains the carboxyl transferase (CT) domain.

The catalysed reaction is N(6)-carboxybiotinyl-L-lysyl-[protein] + acetyl-CoA = N(6)-biotinyl-L-lysyl-[protein] + malonyl-CoA. It catalyses the reaction N(6)-carboxybiotinyl-L-lysyl-[protein] + propanoyl-CoA = methylmalonyl-CoA + N(6)-biotinyl-L-lysyl-[protein]. Its pathway is lipid metabolism; fatty acid biosynthesis. The protein operates within lipid metabolism; mycolic acid biosynthesis. Functionally, component of a biotin-dependent acyl-CoA carboxylase complex. This subunit transfers the CO2 from carboxybiotin to the CoA ester substrate. When associated with the alpha3 subunit AccA3, is involved in the carboxylation of acetyl-CoA and propionyl-CoA. The polypeptide is Biotin-dependent acetyl-/propionyl-coenzyme A carboxylase beta6 subunit (accD6) (Mycobacterium bovis (strain ATCC BAA-935 / AF2122/97)).